The chain runs to 1195 residues: Probable beta-tubulin polyglutamylase (1195 aa).

Positions M1 to E110 are disordered. 2 stretches are compositionally biased toward acidic residues: residues D17–Q27 and Q44–N79. Coiled coils occupy residues D59–E103 and Q144–Q260. Residues Q80–N89 show a composition bias toward low complexity. Polar residues predominate over residues L90–E110. The segment at P281–Q343 is disordered. Acidic residues predominate over residues D294–E316. Residues R322–N334 are compositionally biased toward basic residues. Positions K350 to N703 constitute a TTL domain. Residues Q500 to L503, K513, and D515 contribute to the ATP site. Positions P674–D756 are c-MTBD region. The interval R783–Q862 is disordered. A compositionally biased stretch (polar residues) spans P825–N849. Acidic residues predominate over residues E850–Q860.

It localises to the cytoplasm. Its subcellular location is the cytoskeleton. The protein resides in the cell projection. The protein localises to the cilium. It is found in the cilium basal body. In terms of biological role, probable tubulin polyglutamylase with a strong preference for beta-tubulin. In Tetrahymena thermophila (strain SB210), this protein is Probable beta-tubulin polyglutamylase (Ttll6a).